Here is a 489-residue protein sequence, read N- to C-terminus: Male-specific lethal 1-like 1 (489 aa).

Disordered regions lie at residues 126–164 (PMVS…VRKG) and 224–311 (VKKD…EDMQ). A coiled-coil region spans residues 179-227 (LLLQLELIEQQQKHLHNKNKEIEDLKAEKEMLMARIERMEHRLQMVKKD). The region spanning 347–466 (TVEVPSWRES…LKQQDFDLPW (120 aa)) is the PEHE domain. The segment at 371–389 (ECLDDSVFLKRHSKLELDE) is interaction with KAT8 HAT domain. Residues 380 to 394 (KRHSKLELDEKRRKR) carry the Bipartite nuclear localization signal motif.

Belongs to the msl-1 family. In terms of assembly, component of a multisubunit histone acetyltransferase complex (MSL). Interacts (via PEHE domain) with KAT8 (via HAT domain) and MSL3 (via MRG domain); both interactions are direct.

Its subcellular location is the nucleus. The protein resides in the nucleoplasm. The protein localises to the nucleus speckle. Functionally, component of histone acetyltransferase complex. Within MSL complex, promotes ubiquitination of histone H2B. The sequence is that of Male-specific lethal 1-like 1 (msl1l1) from Danio rerio (Zebrafish).